The sequence spans 361 residues: UPF0283 membrane protein mlr0776 (361 aa).

A disordered region spans residues 1-33; that stretch reads MTAPRKPAAFRIEPEAAPTQETPKARQAELSRK. The segment covering 23–32 has biased composition (basic and acidic residues); that stretch reads PKARQAELSR. A run of 2 helical transmembrane segments spans residues 73-93 and 108-128; these read LFGSIFFGAIGVLVSLAVGLW and LGWLAAGMAAIAVLALVVILI.

This sequence belongs to the UPF0283 family.

Its subcellular location is the cell inner membrane. This is UPF0283 membrane protein mlr0776 from Mesorhizobium japonicum (strain LMG 29417 / CECT 9101 / MAFF 303099) (Mesorhizobium loti (strain MAFF 303099)).